The primary structure comprises 266 residues: Biotin--[acetyl-CoA-carboxylase] ligase (266 aa).

One can recognise a BPL/LPL catalytic domain in the interval 14-202 (RSLRDQLIGA…ELEARIIQWR (189 aa)). Biotin contacts are provided by residues 38 to 39 (ST), glutamine 63, arginine 67, and lysine 138.

It belongs to the biotin--protein ligase family. Monomer in solution. Forms dimers under specific crystallization conditions.

It catalyses the reaction biotin + L-lysyl-[protein] + ATP = N(6)-biotinyl-L-lysyl-[protein] + AMP + diphosphate + H(+). It carries out the reaction biotin + ATP + H(+) = biotinyl-5'-AMP + diphosphate. The enzyme catalyses biotinyl-5'-AMP + L-lysyl-[protein] = N(6)-biotinyl-L-lysyl-[protein] + AMP + 2 H(+). Its activity is regulated as follows. Binding of biotin and ATP significantly increases the thermal stability of BirA and leads to the formation of a high affinity holoenzyme complex. Functionally, catalyzes the transfer of biotin onto a conserved lysine residue of the biotin carboxyl carrier protein (BCCP) domain of acetyl-CoA carboxylase and converts it to active holo-BCCP. Forms an acyl-adenylate intermediate. Cannot use GTP or desthiobiotin. The polypeptide is Biotin--[acetyl-CoA-carboxylase] ligase (Mycobacterium tuberculosis (strain ATCC 25618 / H37Rv)).